The sequence spans 85 residues: Elicitor peptide 7 (85 aa).

Positions 1–62 are excised as a propeptide; sequence MEGEGRREDG…TEVVNIPRSV (62 aa). The interval 66-85 is disordered; it reads NVAARKGKQQTSSGKGGGTN.

It belongs to the brassicaceae elicitor peptide family.

Its function is as follows. Elicitor of plant defense. The protein is Elicitor peptide 7 (PEP7) of Arabidopsis thaliana (Mouse-ear cress).